Reading from the N-terminus, the 655-residue chain is Kelch-like protein 13 (655 aa).

The BTB domain occupies 92 to 161 (CDVTLMPGDT…IYTAKLSLNM (70 aa)). Residues 196 to 297 (CVEVGRIANT…TPQELINYVQ (102 aa)) form the BACK domain. Kelch repeat units lie at residues 341–389 (HLVT…VIGN), 390–441 (FLYV…ALKG), 442–488 (YLYA…VYGG), 490–535 (MYIS…TVGE), 537–587 (LYVI…VFEN), and 588–636 (KIYV…TLTV).

Component of the BCR(KLHL9-KLHL13) E3 ubiquitin ligase complex, at least composed of CUL3, KLHL9, KLHL13 and RBX1. Interacts with AURKB.

The protein operates within protein modification; protein ubiquitination. In terms of biological role, substrate-specific adapter of a BCR (BTB-CUL3-RBX1) E3 ubiquitin-protein ligase complex required for mitotic progression and cytokinesis. The BCR(KLHL9-KLHL13) E3 ubiquitin ligase complex mediates the ubiquitination of AURKB and controls the dynamic behavior of AURKB on mitotic chromosomes and thereby coordinates faithful mitotic progression and completion of cytokinesis. This chain is Kelch-like protein 13 (KLHL13), found in Homo sapiens (Human).